Here is a 315-residue protein sequence, read N- to C-terminus: tRNA dimethylallyltransferase (315 aa).

Residue 13-20 (GPTAVGKT) participates in ATP binding. 15–20 (TAVGKT) is a binding site for substrate. The interval 38–41 (DSRL) is interaction with substrate tRNA.

The protein belongs to the IPP transferase family. As to quaternary structure, monomer. Mg(2+) serves as cofactor.

The enzyme catalyses adenosine(37) in tRNA + dimethylallyl diphosphate = N(6)-dimethylallyladenosine(37) in tRNA + diphosphate. Functionally, catalyzes the transfer of a dimethylallyl group onto the adenine at position 37 in tRNAs that read codons beginning with uridine, leading to the formation of N6-(dimethylallyl)adenosine (i(6)A). The protein is tRNA dimethylallyltransferase of Herpetosiphon aurantiacus (strain ATCC 23779 / DSM 785 / 114-95).